Reading from the N-terminus, the 357-residue chain is Peptide chain release factor 1 (357 aa).

Residue Gln232 is modified to N5-methylglutamine. Residues 282–291 are compositionally biased toward basic and acidic residues; the sequence is KQRAEQEAAR. The disordered stretch occupies residues 282-302; the sequence is KQRAEQEAARRSQVGTGDRSE.

It belongs to the prokaryotic/mitochondrial release factor family. Post-translationally, methylated by PrmC. Methylation increases the termination efficiency of RF1.

The protein resides in the cytoplasm. Its function is as follows. Peptide chain release factor 1 directs the termination of translation in response to the peptide chain termination codons UAG and UAA. This is Peptide chain release factor 1 from Solidesulfovibrio magneticus (strain ATCC 700980 / DSM 13731 / RS-1) (Desulfovibrio magneticus).